A 418-amino-acid chain; its full sequence is Homocitrate synthase, mitochondrial (418 aa).

Over residues 1 to 10 (MSVSEANGTE) the composition is skewed to polar residues. The interval 1-25 (MSVSEANGTETIKPPMNGNPYGPNP) is disordered. Residues 14-25 (PPMNGNPYGPNP) are compositionally biased toward low complexity. Residues 35-288 (FSIIESTLRE…THKYKLNQLR (254 aa)) form the Pyruvate carboxyltransferase domain. The 2-oxoglutarate site is built by R43, E44, and H103. Position 44 (E44) interacts with L-lysine. Position 44 (E44) interacts with Zn(2+). Residue D123 coordinates L-lysine. Positions 163, 165, 197, 224, and 226 each coordinate 2-oxoglutarate. An L-lysine-binding site is contributed by T197. 2 residues coordinate Zn(2+): H224 and H226. H321 (proton acceptor) is an active-site residue.

Belongs to the alpha-IPM synthase/homocitrate synthase family. Homocitrate synthase LYS20/LYS21 subfamily. It depends on Mg(2+) as a cofactor. Requires Mn(2+) as cofactor. Zn(2+) is required as a cofactor. The cofactor is Co(2+).

The protein localises to the mitochondrion. The catalysed reaction is acetyl-CoA + 2-oxoglutarate + H2O = (2R)-homocitrate + CoA + H(+). The protein operates within amino-acid biosynthesis; L-lysine biosynthesis via AAA pathway; L-alpha-aminoadipate from 2-oxoglutarate: step 1/5. The activity is controled by feedback inhibition by L-lysine, the final product of the pathway that acts as a competitive inhibitor of 2-oxoglutarate. Catalyzes the aldol-type condensation of 2-oxoglutarate with acetyl-CoA to yield homocitrate, the first step of the alpha-aminoadipate (AAA) lysine biosynthesis pathway. This is Homocitrate synthase, mitochondrial from Schizosaccharomyces pombe (strain 972 / ATCC 24843) (Fission yeast).